The sequence spans 455 residues: MGWGGGGGCTPRPPIHQQPPERRVVTVVFLGLLLDLLAFTLLLPLLPGLLESHGRAHDPLYGSWQGGVDWFATAIGMPVEKRYNSVLFGGLIGSAFSVLQFLCAPLTGATSDCLGRRPVMLLCLMGVATSYAVWATSRSFAAFLASRLIGGISKGNVSLSTAIVADLGSPLARSQGMAVIGVAFSLGFTLGPMLGASLPLEMAPWFALLFAASDLLFIFCFLPETLPLEKRAPSIALGFRDAADLLSPLALLRFSAVARGQDPPSGDRLSSLRRLGLVYFLYLFLFSGLEYTLSFLTHQRFQFSSLQQGKMFFLIGLTMATIQGAYARRIHPGGEVAAVKRALLLLVPAFLLIGWGRSLPVLGLGLLLYSFAAAVVVPCLSSVVAGYGSPGQKGTVMGTLRSLGALARAAGPLVAASVYWLAGAQACFTTWSGLFLLPFFLLQKLSYPAQTLKAE.

The next 11 membrane-spanning stretches (helical) occupy residues Val27–Pro47, Val86–Leu106, Cys113–Ala135, Leu148–Gly168, Gly176–Ala196, Met202–Leu222, Leu275–Phe295, Lys310–Ala327, Val336–Gly356, Leu359–Cys379, and Leu421–Leu441.

The protein belongs to the major facilitator superfamily. Expressed in luminal membrane of renal tubules (at protein level). Detected in all tissues tested with higher expression in heart, splee, kidney, leukocytes and prostate.

Its subcellular location is the nucleus inner membrane. The protein localises to the cell membrane. In terms of biological role, probable organic anion transporter which may serve as a transporter for some non-steroidal anti-inflammatory drugs (NSAIDs) as well as other organic anions across the luminal membranes of renal proximal tubules at the final excretion step into the urine. In Homo sapiens (Human), this protein is Major facilitator superfamily domain-containing protein 10 (MFSD10).